The sequence spans 447 residues: MLLNISSSPISHRNPHFLSNFNNPISYFPRRSKTHLSKSHFFPKFTPLSNQSLKNRVLFGNKRYPDGERFDFRSRAISGIDLGSFESVLEAIAVLTTIIVVHESGHFLAASLQGIHVSKFAIGFGPILAKFDYNNVEYSLRAFPLGGFVGFPDNDPDSEIPIDDENLLKNRPTLDRSIVVSAGIIANVIFAYAIIFVQVLSVGLPVQEAFPGVLVPEVKTFSAASRDGLLSGDVILAVDGTELSKTGPDAVSKIVDIVKRNPKSNVVFRIERGGEDFDIRVTPDKNFDGTGKIGVQLSPNVRITKVRPRNIPETFRFVGREFMGLSSNVLDGLKQTFFNFSQTASKVAGPVAIIAVGAEVARSNIDGLYQFAALLNINLAVINLLPLPALDGGTLALILLEAVRGGKKLPVEVEQGIMSSGIMLVIFLGLFLIVKDTLSLDFIKEML.

A chloroplast-targeting transit peptide spans 1–73; sequence MLLNISSSPI…YPDGERFDFR (73 aa). Histidine 102 serves as a coordination point for Zn(2+). Glutamate 103 is a catalytic residue. Residue histidine 106 participates in Zn(2+) binding. The helical transmembrane segment at 177-197 threads the bilayer; it reads SIVVSAGIIANVIFAYAIIFV. Residues 202–244 form the PDZ domain; that stretch reads VGLPVQEAFPGVLVPEVKTFSAASRDGLLSGDVILAVDGTELS. The next 2 membrane-spanning stretches (helical) occupy residues 379–399 and 413–433; these read LAVINLLPLPALDGGTLALIL and VEQGIMSSGIMLVIFLGLFLI.

It belongs to the peptidase M50A family. Zn(2+) serves as cofactor. As to expression, expressed in green seedlings and cotyledons. Low levels of expression in roots, siliques and seeds.

The protein localises to the plastid. It localises to the chloroplast inner membrane. Functionally, metalloprotease essential for chloroplast and plant development. May be involved in regulated intramembrane proteolysis (RIP). This Arabidopsis thaliana (Mouse-ear cress) protein is Membrane metalloprotease ARASP, chloroplastic.